A 343-amino-acid chain; its full sequence is tRNA-specific 2-thiouridylase MnmA 2 (343 aa).

Residues G7–S14 and L33 each bind ATP. C91 acts as the Nucleophile in catalysis. An intrachain disulfide couples C91 to C189. An ATP-binding site is contributed by G115. The interval K139–Q141 is interaction with tRNA. The active-site Cysteine persulfide intermediate is C189.

The protein belongs to the MnmA/TRMU family.

It is found in the cytoplasm. The enzyme catalyses S-sulfanyl-L-cysteinyl-[protein] + uridine(34) in tRNA + AH2 + ATP = 2-thiouridine(34) in tRNA + L-cysteinyl-[protein] + A + AMP + diphosphate + H(+). Its function is as follows. Catalyzes the 2-thiolation of uridine at the wobble position (U34) of tRNA, leading to the formation of s(2)U34. This chain is tRNA-specific 2-thiouridylase MnmA 2, found in Fusobacterium nucleatum subsp. nucleatum (strain ATCC 25586 / DSM 15643 / BCRC 10681 / CIP 101130 / JCM 8532 / KCTC 2640 / LMG 13131 / VPI 4355).